A 51-amino-acid chain; its full sequence is Basic phospholipase A2 homolog BmatTX-I (51 aa).

A disulfide bond links cysteine 28 and cysteine 44.

As to quaternary structure, monomer. Expressed by the venom gland.

The protein localises to the secreted. In terms of biological role, snake venom phospholipase A2 homolog that lacks enzymatic activity. Shows high myotoxic activity, neutrophile activation (demonstrated by activation induction of IL-1beta production), slight cytotoxicity against Jurkat (leukemia T) and SK-BR-3 (breast adenocarcinoma) tumor cell lines, and slight antiparasitic activity against promastigote forms of Leishmania amazonensis. A model of myotoxic mechanism has been proposed: an apo Lys49-PLA2 is activated by the entrance of a hydrophobic molecule (e.g. fatty acid) at the hydrophobic channel of the protein leading to a reorientation of a monomer. This reorientation causes a transition between 'inactive' to 'active' states, causing alignment of C-terminal and membrane-docking sites (MDoS) side-by-side and putting the membrane-disruption sites (MDiS) in the same plane, exposed to solvent and in a symmetric position for both monomers. The MDoS region stabilizes the toxin on membrane by the interaction of charged residues with phospholipid head groups. Subsequently, the MDiS region destabilizes the membrane with penetration of hydrophobic residues. This insertion causes a disorganization of the membrane, allowing an uncontrolled influx of ions (i.e. calcium and sodium), and eventually triggering irreversible intracellular alterations and cell death. In Bothrops mattogrossensis (Pitviper), this protein is Basic phospholipase A2 homolog BmatTX-I.